Reading from the N-terminus, the 286-residue chain is ATP synthase gamma chain (286 aa).

Belongs to the ATPase gamma chain family. In terms of assembly, F-type ATPases have 2 components, CF(1) - the catalytic core - and CF(0) - the membrane proton channel. CF(1) has five subunits: alpha(3), beta(3), gamma(1), delta(1), epsilon(1). CF(0) has three main subunits: a, b and c.

It is found in the cell membrane. Produces ATP from ADP in the presence of a proton gradient across the membrane. The gamma chain is believed to be important in regulating ATPase activity and the flow of protons through the CF(0) complex. This chain is ATP synthase gamma chain, found in Bacillus cereus (strain G9842).